Here is a 43-residue protein sequence, read N- to C-terminus: Protein PsbN (43 aa).

A helical membrane pass occupies residues 4 to 24 (ATIIVIFVSSLLVGITAYSVY).

The protein belongs to the PsbN family.

It is found in the plastid. It localises to the chloroplast thylakoid membrane. Its function is as follows. May play a role in photosystem I and II biogenesis. The chain is Protein PsbN from Thalassiosira pseudonana (Marine diatom).